A 905-amino-acid chain; its full sequence is Catenin alpha-2 (905 aa).

T632 bears the Phosphothreonine mark. S640, S651, and S853 each carry phosphoserine. Residues 869–879 (VKREKPEEFQT) show a composition bias toward basic and acidic residues. The interval 869–891 (VKREKPEEFQTRVRRGSQKKHIS) is disordered. Basic residues predominate over residues 880–890 (RVRRGSQKKHI). S891 bears the Phosphoserine mark.

This sequence belongs to the vinculin/alpha-catenin family. As to quaternary structure, interacts with CDH1 and CDH2. Interacts with ZNF639; recruits CTNNA2 to the nucleus. Interacts with F-actin.

The protein localises to the cell membrane. Its subcellular location is the cytoplasm. The protein resides in the cytoskeleton. It is found in the cell junction. It localises to the adherens junction. The protein localises to the cell projection. Its subcellular location is the axon. The protein resides in the nucleus. In terms of biological role, may function as a linker between cadherin adhesion receptors and the cytoskeleton to regulate cell-cell adhesion and differentiation in the nervous system. Required for proper regulation of cortical neuronal migration and neurite growth. It acts as a negative regulator of Arp2/3 complex activity and Arp2/3-mediated actin polymerization. It thereby suppresses excessive actin branching which would impair neurite growth and stability. Regulates morphological plasticity of synapses and cerebellar and hippocampal lamination during development. Functions in the control of startle modulation. The sequence is that of Catenin alpha-2 (CTNNA2) from Pongo abelii (Sumatran orangutan).